A 244-amino-acid chain; its full sequence is MANLLVSTFIFSALLLISTATAATFEILNQCSYTVWAAASPGGGRRLDAGQSWRLDVAAGTKMARIWGRTNCNFDSSGRGRCQTGDCSGGLQCTGWGQPPNTLAEYALNQFNNLDFYDISLVDGFNIPMEFSPTSSNCHRILCTADINGQCPNVLRAPGGCNNPCTVFQTNQYCCTNGQGSCSDTEYSRFFKQRCPDAYSYPQDDPTSTFTCTNTNYRVVFCPRSRLGATGSHQLPIKMVTEEN.

An N-terminal signal peptide occupies residues 1 to 22 (MANLLVSTFIFSALLLISTATA). Disulfide bonds link Cys31–Cys222, Cys72–Cys82, Cys87–Cys93, Cys138–Cys212, Cys143–Cys195, Cys151–Cys161, Cys165–Cys174, and Cys175–Cys182.

It belongs to the thaumatin family.

The sequence is that of Osmotin-like protein OSM34 (OSM34) from Arabidopsis thaliana (Mouse-ear cress).